We begin with the raw amino-acid sequence, 892 residues long: UPF0182 protein Gura_0902 (892 aa).

7 helical membrane passes run 6–26 (FIIILVVVAVILPFISSLINF), 50–70 (VGAGLFFGVLLFIFAMINLHF), 103–123 (LGILASAILAILACKWGAMQW), 158–178 (MLKIFAGFTVLATTVLVGAVY), 201–221 (LAVLIGIFSLTVAAGFYLNGC), 248–268 (ILTVLTPLAGAILAAGLWQGA), and 271–291 (LALLPPILVIAVYGIGIKAYP).

It belongs to the UPF0182 family.

The protein localises to the cell membrane. This is UPF0182 protein Gura_0902 from Geotalea uraniireducens (strain Rf4) (Geobacter uraniireducens).